Consider the following 119-residue polypeptide: Outer membrane protein assembly factor BamE (119 aa).

The first 19 residues, 1 to 19 (MQFTKWFIALPLAVTALSG), serve as a signal peptide directing secretion. Residue cysteine 20 is the site of N-palmitoyl cysteine attachment. Residue cysteine 20 is the site of S-diacylglycerol cysteine attachment.

Belongs to the BamE family. In terms of assembly, part of the Bam complex.

The protein resides in the cell outer membrane. Part of the outer membrane protein assembly complex, which is involved in assembly and insertion of beta-barrel proteins into the outer membrane. The protein is Outer membrane protein assembly factor BamE of Vibrio cholerae serotype O1 (strain ATCC 39541 / Classical Ogawa 395 / O395).